Reading from the N-terminus, the 504-residue chain is Glycerol kinase (504 aa).

Residue T13 participates in ADP binding. T13, T14, and S15 together coordinate ATP. Residue T13 participates in sn-glycerol 3-phosphate binding. Position 17 (R17) interacts with ADP. Residues R83, E84, and Y135 each coordinate sn-glycerol 3-phosphate. Residues R83, E84, and Y135 each coordinate glycerol. H231 carries the phosphohistidine; by HPr modification. D245 is a sn-glycerol 3-phosphate binding site. Residues D245 and Q246 each contribute to the glycerol site. ADP-binding residues include T267 and G310. T267, G310, Q314, and G411 together coordinate ATP. ADP contacts are provided by G411 and N415.

Belongs to the FGGY kinase family. As to quaternary structure, homotetramer and homodimer (in equilibrium). Post-translationally, the phosphoenolpyruvate-dependent sugar phosphotransferase system (PTS), including enzyme I, and histidine-containing protein (HPr) are required for the phosphorylation, which leads to the activation of the enzyme.

The catalysed reaction is glycerol + ATP = sn-glycerol 3-phosphate + ADP + H(+). The protein operates within polyol metabolism; glycerol degradation via glycerol kinase pathway; sn-glycerol 3-phosphate from glycerol: step 1/1. With respect to regulation, activated by phosphorylation and inhibited by fructose 1,6-bisphosphate (FBP). Functionally, key enzyme in the regulation of glycerol uptake and metabolism. Catalyzes the phosphorylation of glycerol to yield sn-glycerol 3-phosphate. In Pediococcus pentosaceus (strain ATCC 25745 / CCUG 21536 / LMG 10740 / 183-1w), this protein is Glycerol kinase.